Reading from the N-terminus, the 76-residue chain is MANGTPAHELRELNAEELKTRLTEAKEELFNLRFQAATGQLTNNRRLRTVKRDIARIYTVIRERELGLSEVPGAEA.

It belongs to the universal ribosomal protein uL29 family.

This chain is Large ribosomal subunit protein uL29, found in Corynebacterium diphtheriae (strain ATCC 700971 / NCTC 13129 / Biotype gravis).